A 301-amino-acid chain; its full sequence is CPX chromosomal region candidate gene 1 protein (301 aa).

The interval 1–77 (MSYPTKEGSD…ENSELETEIQ (77 aa)) is disordered. The segment covering 44-60 (VETNPINREPGTATSQE) has biased composition (polar residues).

In terms of tissue distribution, expressed in a variety of fetal tissues.

The sequence is that of CPX chromosomal region candidate gene 1 protein (CPXCR1) from Homo sapiens (Human).